The chain runs to 458 residues: Paired box protein Pax-8 (458 aa).

Positions 18–144 (GHGGLNQLGG…SSINRIIRTK (127 aa)) form a DNA-binding region, paired. The segment at 21 to 77 (GLNQLGGAFVNGRPLPEVVRQRIVDLAHQGVRPCDISRQLRVSHGCVSKILGRYYET) is PAI subdomain. Residues 96-144 (KVVEKIGDYKRQNPTMFAWEIRDRLLAEGVCDNDTVPSVSSINRIIRTK) are RED subdomain. Positions 198 to 217 (PGADGKRKLDDSDQESCRLS) are disordered.

The protein resides in the nucleus. In terms of biological role, probable transcription factor. Involved in kidney development, acting synergistically with lhx1/lim-1 to establish the pronephric primordium in late gastrulae/early neurulae. The protein is Paired box protein Pax-8 of Xenopus tropicalis (Western clawed frog).